The sequence spans 588 residues: bZip transcription factor GAP1 (588 aa).

The segment at 1–49 (MAEVDNGGAQKSSASRKKRYQELDPETRMKRVAQNRAAQKAFRERKERK) is disordered. Residues 20-29 (YQELDPETRM) show a composition bias toward basic and acidic residues. The 64-residue stretch at 25 to 88 (PETRMKRVAQ…SILVKELRKY (64 aa)) folds into the bZIP domain. The tract at residues 28-51 (RMKRVAQNRAAQKAFRERKERKMK) is basic motif. The leucine-zipper stretch occupies residues 53–60 (LERKVVDL). Positions 164-174 (FNVTGQLTPPG) are enriched in polar residues. The segment at 164 to 219 (FNVTGQLTPPGNTSSSTTANSVAANAKKQSIPHSDSSDSNESKNTWNTDPTSSEDW) is disordered. Low complexity predominate over residues 175–189 (NTSSSTTANSVAANA). Transcription activation regions lie at residues 189-327 (AKKQ…SNTW) and 376-477 (GRTQ…MQTE). Polar residues predominate over residues 190–217 (KKQSIPHSDSSDSNESKNTWNTDPTSSE). The interval 253 to 265 (CTKLNQACGTKAC) is n-CRD. The tract at residues 487–529 (DMLNSSRMKETIDNQNIGEKTTKDDNEDDDEDDENDNTVVPSR) is disordered. The segment covering 511 to 522 (DNEDDDEDDEND) has biased composition (acidic residues). The c-CRD stretch occupies residues 536–567 (CSEIWDRITAHPKYSDIDIDGLCSELMAKAKC). Positions 552–559 (IDIDGLCS) match the Nuclear export signal motif.

It is found in the nucleus. Transcription factor that plays a critical role in response to various stresses and reduces the stress through transcriptional activation of its target genes including multidrug transporter FLR1. The protein is bZip transcription factor GAP1 of Candida glabrata (strain ATCC 2001 / BCRC 20586 / JCM 3761 / NBRC 0622 / NRRL Y-65 / CBS 138) (Yeast).